A 142-amino-acid polypeptide reads, in one-letter code: Hemoglobin subunit alpha (142 aa).

Residues 2 to 142 form the Globin domain; the sequence is VLSPDDKKHV…VSTVLTSKYR (141 aa). Serine 4 carries the post-translational modification Phosphoserine. N6-succinyllysine is present on residues lysine 8 and lysine 12. Lysine 17 carries the post-translational modification N6-acetyllysine; alternate. Lysine 17 bears the N6-succinyllysine; alternate mark. Tyrosine 25 is modified (phosphotyrosine). At serine 36 the chain carries Phosphoserine. Residue lysine 41 is modified to N6-succinyllysine. Residue serine 50 is modified to Phosphoserine. Histidine 59 lines the O2 pocket. A heme b-binding site is contributed by histidine 88. Serine 103 is subject to Phosphoserine. Residue threonine 109 is modified to Phosphothreonine. Serine 125 and serine 132 each carry phosphoserine. Phosphothreonine occurs at positions 135 and 138. Serine 139 carries the post-translational modification Phosphoserine.

Belongs to the globin family. In terms of assembly, heterotetramer of two alpha chains and two beta chains. In terms of tissue distribution, red blood cells.

Involved in oxygen transport from the lung to the various peripheral tissues. Functionally, hemopressin acts as an antagonist peptide of the cannabinoid receptor CNR1. Hemopressin-binding efficiently blocks cannabinoid receptor CNR1 and subsequent signaling. This chain is Hemoglobin subunit alpha (HBA), found in Papio anubis (Olive baboon).